The primary structure comprises 864 residues: Structure-specific endonuclease subunit SLX4 (864 aa).

Residues 35 to 54 (SPLSLPSPTSLLDFLSTSTS) are compositionally biased toward low complexity. 7 disordered regions span residues 35 to 72 (SPLS…GKEV), 89 to 113 (VVSG…PGNA), 160 to 193 (KANQ…HIND), 288 to 318 (GLSD…NPPK), 348 to 382 (LSDE…EKKN), 413 to 432 (ANGH…HISN), and 625 to 771 (KTSN…ETLP). Residues 58-72 (ARSDTDGDKTQGKEV) are compositionally biased toward basic and acidic residues. Composition is skewed to polar residues over residues 160–169 (KANQTVSLQP) and 289–306 (LSDS…SATS). Positions 307 to 317 (KPRRVKAKNPP) are enriched in basic residues. Residues 659 to 668 (SIPQTATTQV) show a composition bias toward polar residues. Low complexity predominate over residues 683–695 (VPVPSRRSTSTSK). Residues 743 to 771 (PESFNLPTTPLTIRSGKIPSTGTASETLP) are compositionally biased toward polar residues.

The protein belongs to the SLX4 family. In terms of assembly, forms a heterodimer with SLX1. In terms of processing, phosphorylated in response to DNA damage.

The protein resides in the nucleus. Regulatory subunit of the SLX1-SLX4 structure-specific endonuclease that resolves DNA secondary structures generated during DNA repair and recombination. Has endonuclease activity towards branched DNA substrates, introducing single-strand cuts in duplex DNA close to junctions with ss-DNA. The polypeptide is Structure-specific endonuclease subunit SLX4 (Paracoccidioides brasiliensis (strain Pb03)).